The following is a 203-amino-acid chain: NAD(P)H-quinone oxidoreductase subunit M, chloroplastic (203 aa).

A chloroplast-targeting transit peptide spans 1–21 (MAASSSYMACAKFSMLGWLGG). Positions 34-48 (SPQEQAEVQESQEVN) are enriched in low complexity. Residues 34–61 (SPQEQAEVQESQEVNAQEEEKVKQPVQP) form a disordered region.

This sequence belongs to the NDH complex subunit M family. Part of the chloroplast NDH complex, composed of a mixture of chloroplast and nucleus encoded subunits. Component of the NDH subcomplex A, at least composed of ndhH, ndhI, ndhJ, ndhK, ndhL, ndhM, ndhN and ndhO.

It is found in the plastid. It localises to the chloroplast thylakoid membrane. It catalyses the reaction a plastoquinone + NADH + (n+1) H(+)(in) = a plastoquinol + NAD(+) + n H(+)(out). The catalysed reaction is a plastoquinone + NADPH + (n+1) H(+)(in) = a plastoquinol + NADP(+) + n H(+)(out). NDH shuttles electrons from NAD(P)H:plastoquinone, via FMN and iron-sulfur (Fe-S) centers, to quinones in the photosynthetic chain and possibly in a chloroplast respiratory chain. The immediate electron acceptor for the enzyme in this species is believed to be plastoquinone. Couples the redox reaction to proton translocation, and thus conserves the redox energy in a proton gradient. The protein is NAD(P)H-quinone oxidoreductase subunit M, chloroplastic of Populus jackii (Balm of Gilead).